We begin with the raw amino-acid sequence, 950 residues long: Sodium/calcium exchanger Calx (950 aa).

Positions 1 to 22 (MQLLLKSIFTCALFVIFVYATA) are cleaved as a signal peptide. At 23–120 (QSLLKVQETE…PQRNISVGDR (98 aa)) the chain is on the extracellular side. N-linked (GlcNAc...) asparagine glycans are attached at residues asparagine 39, asparagine 47, and asparagine 114. A helical transmembrane segment spans residues 121–141 (LVRGFVYFVLLIYLFVGVSII). Topologically, residues 142–179 (ADRFMAAIEAITSIERAVVVKGPNNTKQVMHVRIWNET) are cytoplasmic. A helical transmembrane segment spans residues 180–200 (VANLTLMALGSSAPEILLSVI). The Extracellular portion of the chain corresponds to 201–216 (EIYAKDFESGDLGPGT). Residues 217–237 (IVGSAAYNLFMIIAVCMIWIP) traverse the membrane as a helical segment. The Cytoplasmic portion of the chain corresponds to 238–257 (AGEVRRIRHLRVFFVTALFS). A run of 2 helical transmembrane segments spans residues 258–278 (VFAY…VILV) and 279–299 (WEAI…YIAE). The Cytoplasmic portion of the chain corresponds to 300–749 (RRLLVYKYMD…NDDEEEEVPS (450 aa)). The segment at 301–318 (RLLVYKYMDKNYRVNKRG) is corresponds to the exchanger inhibitory peptide (XIP) found in other sodium/calcium exchange proteins and thought to be involved in calmodulin binding. The region spanning 440 to 551 (DPIRMYFEPG…MIATVMILDD (112 aa)) is the Calx-beta 1 domain. Ca(2+) contacts are provided by glutamate 455, aspartate 490, aspartate 515, aspartate 516, valine 518, glutamate 520, glutamate 523, aspartate 550, aspartate 551, and aspartate 552. The 140-residue stretch at 555–694 (GIFAFTDSVF…LTTAYVRIRE (140 aa)) folds into the Calx-beta 2 domain. Residues 750 to 770 (CFSYVSHFVCLFWKVLFAFVP) traverse the membrane as a helical segment. The Extracellular segment spans residues 771 to 775 (PTDIC). Residues 776–796 (GGYVTFVVSIFVIGVITAIIG) form a helical membrane-spanning segment. The Cytoplasmic portion of the chain corresponds to 797–813 (DAASYFGCALNIKDSVT). A helical membrane pass occupies residues 814-834 (AILFVALGTSIPDTFASMIAA). Residues 835–848 (KHDEGADNCIGNVT) lie on the Extracellular side of the membrane. N-linked (GlcNAc...) asparagine glycosylation occurs at asparagine 846. The chain crosses the membrane as a helical span at residues 849-869 (GSNAVNVFLGIGLAWTIAAVY). Topologically, residues 870–883 (HSSHGMTFNVEPGT) are cytoplasmic. Residues 884 to 904 (IGFAVALFCGEALIAIMLIMF) traverse the membrane as a helical segment. Residues 905-923 (RRWHKGIGAELGGPKVSKY) are Extracellular-facing. The helical transmembrane segment at 924–944 (ISAAILVFLWVFYVVICILEA) threads the bilayer. The Cytoplasmic segment spans residues 945 to 950 (YDVIRV).

It belongs to the Ca(2+):cation antiporter (CaCA) (TC 2.A.19) family. SLC8 subfamily. As to expression, ubiquitously expressed with higher expression in head compared to body (at protein level). Enriched in photoreceptor cells of the eye (at protein level). In the adult head, expressed in retina, optic ganglia and all neuronal tissues.

The protein localises to the cell membrane. It is found in the cell projection. Its subcellular location is the rhabdomere membrane. The catalysed reaction is Ca(2+)(in) + 3 Na(+)(out) = Ca(2+)(out) + 3 Na(+)(in). With respect to regulation, activated by a Na(+) electrochemical gradient but also undergoes Na(2+)-dependent inactivation. Inhibited by micromolar levels of cytoplasmic Ca(2+), which is the opposite of most characterized mammalian homologs. Exhibits greater extent of inhibition by Ca(2+) than isoform D/1.2. Its activity is regulated as follows. Exhibits greater Na(2+)-dependent inactivation than isoform A/1.1, probably due to greater stability of the inactive Na(2+)-bound form. Functionally, na(+)/Ca(2+) antiporter that couples the energy of a Na(+) electrochemical gradient to the movement of Ca(2+) against an electrochemical gradient across a membrane, which contributes to the regulation of cytoplasmic Ca(2+) levels. Mediates Na(+)/Ca(2+) exchange in photoreceptor cells and involved in controlling Ca(2+) levels during phototransduction, affecting magnitude of the photoresponse, activation kinetics, signal amplification, response termination, and light adaptation. Light induced depolarization of photoreceptor cells, resulting in Na(+) and Ca(2+) entry through trp/transient receptor potential protein channels, is essential for photoreceptor cell function but may result in toxic levels of cytoplasmic Ca(2+). Na(+)/Ca(2+) antiporter regulation of Ca(2+) levels protects photoreceptor cells from light-dependent retinal degeneration. This Drosophila melanogaster (Fruit fly) protein is Sodium/calcium exchanger Calx.